Consider the following 180-residue polypeptide: Acireductone dioxygenase (180 aa).

Fe(2+)-binding residues include histidine 99, histidine 101, glutamate 105, and histidine 145. Ni(2+) contacts are provided by histidine 99, histidine 101, glutamate 105, and histidine 145.

This sequence belongs to the acireductone dioxygenase (ARD) family. As to quaternary structure, monomer. It depends on Fe(2+) as a cofactor. Ni(2+) is required as a cofactor.

The enzyme catalyses 1,2-dihydroxy-5-(methylsulfanyl)pent-1-en-3-one + O2 = 3-(methylsulfanyl)propanoate + CO + formate + 2 H(+). It carries out the reaction 1,2-dihydroxy-5-(methylsulfanyl)pent-1-en-3-one + O2 = 4-methylsulfanyl-2-oxobutanoate + formate + 2 H(+). Its pathway is amino-acid biosynthesis; L-methionine biosynthesis via salvage pathway; L-methionine from S-methyl-5-thio-alpha-D-ribose 1-phosphate: step 5/6. Functionally, catalyzes 2 different reactions between oxygen and the acireductone 1,2-dihydroxy-3-keto-5-methylthiopentene (DHK-MTPene) depending upon the metal bound in the active site. Fe-containing acireductone dioxygenase (Fe-ARD) produces formate and 2-keto-4-methylthiobutyrate (KMTB), the alpha-ketoacid precursor of methionine in the methionine recycle pathway. Ni-containing acireductone dioxygenase (Ni-ARD) produces methylthiopropionate, carbon monoxide and formate, and does not lie on the methionine recycle pathway. The chain is Acireductone dioxygenase from Geobacillus kaustophilus (strain HTA426).